Here is a 330-residue protein sequence, read N- to C-terminus: 2-alkyl-3-oxoalkanoate reductase (330 aa).

Tyr139 serves as the catalytic Proton acceptor. Residue Lys143 participates in NADP(+) binding.

Belongs to the 3-beta-HSD family. Homodimer.

The catalysed reaction is a (2R,3S)-2-alkyl-3-hydroxyalkanoate + NADP(+) = an (R)-2-alkyl-3-oxoalkanoate + NADPH + H(+). Its function is as follows. Involved in olefin biosynthesis. Catalyzes the reversible stereospecific NADPH-dependent reduction of 2-alkyl-3-oxoalkanoic acids to 2-alkyl-3-hydroxyalkanoic acids. In the oxidative direction, syn-2-decyl-3-hydroxytetradecanoic acid is the preferred substrate. In the reductive direction, (2R/S)-2-hexyl-3-ketodecanoic acid is accepted as substrate. The polypeptide is 2-alkyl-3-oxoalkanoate reductase (Stenotrophomonas maltophilia (strain K279a)).